A 91-amino-acid polypeptide reads, in one-letter code: Mercuric transport protein periplasmic component (91 aa).

Residues 1–19 (MKKLFASLALAAFVAPVFA) form the signal peptide. The HMA domain occupies 22-88 (QTVTLSVPGM…ATEDAGYPSS (67 aa)). Positions 33 and 36 each coordinate Hg(2+).

Belongs to the MerP family. In terms of assembly, monomer.

The protein localises to the periplasm. Functionally, involved in mercury resistance. Acts as a mercury scavenger that specifically binds to a mercuric ion in the periplasm and probably passes it to the cytoplasmic mercuric reductase MerA via the mercuric transport protein MerT. The sequence is that of Mercuric transport protein periplasmic component from Acinetobacter calcoaceticus.